The primary structure comprises 373 residues: Caspase-4 (373 aa).

The required for LPS-binding stretch occupies residues 1–59 (MAENKHPDKPLKVLEQLGKEVLTEYLEKLVQSNVLKLKEEDKQKFNNAERSDKRWVFVD). Residues 1–80 (MAENKHPDKP…MLLQTFFSVD (80 aa)) constitute a propeptide that is removed on maturation. The CARD domain maps to 1–91 (MAENKHPDKP…GSHHGEANLE (91 aa)). Residue S83 is modified to Phosphoserine. Residues H206 and C254 contribute to the active site. The propeptide occupies 267-285 (SSKPQLCRGVDLPRNMEAD). R310 is subject to (Microbial infection) ADP-riboxanated arginine.

The protein belongs to the peptidase C14A family. Heterotetramer that consists of two anti-parallel arranged heterodimers, each one formed by a 20 kDa (Caspase-4 subunit p20) and a 10 kDa (Caspase-4 subunit p10) subunit. Upon direct LPS-binding, forms large homooligomers, resulting in its activation. These oligomers are often referred to as 'non-canonical inflammasomes'. In its precursor form, interacts with TMEM214; this interaction is required for association with the endoplasmic reticulum membrane. Interacts with CASP1. Interacts with NOD2. Interacts with Serpinb1a, Serpinb1b and Serpinb1c; these interactions regulate CASP4 activity. In terms of assembly, heterotetramer that consists of two anti-parallel arranged heterodimers, each one formed by a 20 kDa (Caspase-4 subunit p20) and a 10 kDa (Caspase-4 subunit p10) subunit. In response to activation signals, undergoes autoproteolytic cleavage and activation. Post-translationally, (Microbial infection) ADP-riboxanation by S.flexneri OspC3 blocks CASP4 autoprocessing, preventing CASP4 activation and ability to recognize and cleave GSDMD, thereby thwarting the inflammasome/pyroptosis-mediated defense. As to expression, widely expressed, including in thymus, lung and spleen (at protein level). Very low levels, if any, in the brain.

It localises to the cytoplasm. It is found in the cytosol. The protein localises to the endoplasmic reticulum membrane. Its subcellular location is the mitochondrion. The protein resides in the inflammasome. It localises to the secreted. It carries out the reaction Strict requirement for Asp at the P1 position and has a preferred cleavage sequence of (Ile/Leu/Val/Phe)-Gly-His-Asp-|-.. With respect to regulation, activated by homooligomerization induced by direct binding to cytosolic LPS, in a TLR4-independent manner. In addition to LPS, CASP4/CASP11 may also be activated by oxidized phospholipid 1-palmitoyl-2-arachidonoyl- sn-glycero-3-phosphorylcholine, an oxidized phospholipid (oxPAPC), in dendritic cells, promoting adaptive immunity. The role of oxPAPC is however unclear and another report suggests that oxPAPC competes with LPS-binding and inhibits the non-canonical inflammasome in macrophages. Inflammatory caspase that acts as the effector of the non-canonical inflammasome by mediating lipopolysaccharide (LPS)-induced pyroptosis. Also indirectly activates the NLRP3 and NLRP6 inflammasomes. Acts as a thiol protease that cleaves a tetrapeptide after an Asp residue at position P1: catalyzes cleavage of CGAS and GSDMD. In contrast to its human ortholog, does not cleave IL18. Effector of the non-canonical inflammasome independently of NLRP3 inflammasome and CASP1: the non-canonical inflammasome promotes pyroptosis through GSDMD cleavage without involving secretion of cytokine IL1B and IL18. In the non-canonical inflammasome, CASP4/CASP11 is activated by direct binding to the lipid A moiety of LPS without the need of an upstream sensor. LPS-binding promotes CASP4/CASP11 activation and CASP4/CASP11-mediated cleavage of GSDMD, followed by pyroptosis of infected cells and their extrusion into the gut lumen. Also indirectly promotes secretion of mature cytokines (IL1A, IL18 and HMGB1) downstream of GSDMD-mediated pyroptosis via activation of the NLRP3 and NLRP6 inflammasomes. Involved in NLRP3-dependent CASP1 activation and IL1B and IL18 secretion in response to non-canonical activators, such as UVB radiation or cholera enterotoxin. Involved in NLRP6 inflammasome-dependent activation in response to lipoteichoic acid (LTA), a cell-wall component of Gram-positive bacteria, which leads to CASP1 activation and IL1B and IL18 secretion. Involved in LPS-induced IL6 secretion; this activity may not require caspase enzymatic activity. The non-canonical inflammasome is required for innate immunity to cytosolic, but not vacuolar, bacteria. Plays a crucial role in the restriction of S.typhimurium replication in colonic epithelial cells during infection. Activation of the non-canonical inflammasome in brain endothelial cells can lead to excessive pyroptosis, leading to blood-brain barrier breakdown. Pyroptosis limits bacterial replication, while cytokine secretion promotes the recruitment and activation of immune cells and triggers mucosal inflammation. May also act as an activator of adaptive immunity in dendritic cells, following activation by oxidized phospholipid 1-palmitoyl-2-arachidonoyl- sn-glycero-3-phosphorylcholine, an oxidized phospholipid (oxPAPC). Cleavage of GSDMD is not strictly dependent on the consensus cleavage site but depends on an exosite interface on CASP4/CASP11 that recognizes and binds the Gasdermin-D, C-terminal (GSDMD-CT) part. In contrast, it does not directly process IL1B. During non-canonical inflammasome activation, cuts CGAS and may play a role in the regulation of antiviral innate immune activation. This chain is Caspase-4, found in Mus musculus (Mouse).